The primary structure comprises 106 residues: Apovitellenin-1 (106 aa).

The first 24 residues, M1–S24, serve as a signal peptide directing secretion.

The protein belongs to the apovitellenin family. In terms of assembly, homodimer; disulfide-linked. Produced by the liver, secreted into the blood and then sequestred by receptor mediated endocytosis into growing oocytes.

Its function is as follows. Protein component of the very low density lipoprotein (VLDL) of egg-laying females. Potent lipoprotein lipase inhibitor, preventing the loss of triglycerides from VLDL on their way from the liver to the growing oocytes. This Gallus gallus (Chicken) protein is Apovitellenin-1.